The primary structure comprises 603 residues: Proline--tRNA ligase (603 aa).

This sequence belongs to the class-II aminoacyl-tRNA synthetase family. ProS type 1 subfamily. In terms of assembly, homodimer.

It localises to the cytoplasm. It carries out the reaction tRNA(Pro) + L-proline + ATP = L-prolyl-tRNA(Pro) + AMP + diphosphate. Its function is as follows. Catalyzes the attachment of proline to tRNA(Pro) in a two-step reaction: proline is first activated by ATP to form Pro-AMP and then transferred to the acceptor end of tRNA(Pro). As ProRS can inadvertently accommodate and process non-cognate amino acids such as alanine and cysteine, to avoid such errors it has two additional distinct editing activities against alanine. One activity is designated as 'pretransfer' editing and involves the tRNA(Pro)-independent hydrolysis of activated Ala-AMP. The other activity is designated 'posttransfer' editing and involves deacylation of mischarged Ala-tRNA(Pro). The misacylated Cys-tRNA(Pro) is not edited by ProRS. This Arthrobacter sp. (strain FB24) protein is Proline--tRNA ligase.